Consider the following 192-residue polypeptide: Probable metallophosphoesterase MJ0623 (192 aa).

Positions 41, 43, 70, 92, 115, 144, and 146 each coordinate a divalent metal cation.

It belongs to the metallophosphoesterase superfamily. YfcE family. A divalent metal cation serves as cofactor.

This chain is Probable metallophosphoesterase MJ0623, found in Methanocaldococcus jannaschii (strain ATCC 43067 / DSM 2661 / JAL-1 / JCM 10045 / NBRC 100440) (Methanococcus jannaschii).